We begin with the raw amino-acid sequence, 266 residues long: Type III pantothenate kinase (266 aa).

ATP is bound at residue 9–16 (DAGNSRIK). Residues Y96 and 103–106 (GSDR) contribute to the substrate site. Catalysis depends on D105, which acts as the Proton acceptor. T129 contacts ATP. Residue T189 coordinates substrate.

Belongs to the type III pantothenate kinase family. Homodimer. NH4(+) is required as a cofactor. K(+) serves as cofactor.

It is found in the cytoplasm. The catalysed reaction is (R)-pantothenate + ATP = (R)-4'-phosphopantothenate + ADP + H(+). It participates in cofactor biosynthesis; coenzyme A biosynthesis; CoA from (R)-pantothenate: step 1/5. Catalyzes the phosphorylation of pantothenate (Pan), the first step in CoA biosynthesis. The protein is Type III pantothenate kinase of Burkholderia lata (strain ATCC 17760 / DSM 23089 / LMG 22485 / NCIMB 9086 / R18194 / 383).